A 145-amino-acid polypeptide reads, in one-letter code: Deoxyuridine 5'-triphosphate nucleotidohydrolase (145 aa).

Substrate is bound by residues 62–64 (RSG), asparagine 75, 79–81 (TVD), and lysine 89.

The protein belongs to the dUTPase family. Requires Mg(2+) as cofactor.

It carries out the reaction dUTP + H2O = dUMP + diphosphate + H(+). The protein operates within pyrimidine metabolism; dUMP biosynthesis; dUMP from dCTP (dUTP route): step 2/2. This enzyme is involved in nucleotide metabolism: it produces dUMP, the immediate precursor of thymidine nucleotides and it decreases the intracellular concentration of dUTP so that uracil cannot be incorporated into DNA. This Helicobacter pylori (strain J99 / ATCC 700824) (Campylobacter pylori J99) protein is Deoxyuridine 5'-triphosphate nucleotidohydrolase.